Reading from the N-terminus, the 28-residue chain is Cytochrome b6-f complex subunit 6 (28 aa).

The chain crosses the membrane as a helical span at residues 2-22; that stretch reads VEYLVILSGMFGLALACFFGL.

Belongs to the PetL family. The 4 large subunits of the cytochrome b6-f complex are cytochrome b6, subunit IV (17 kDa polypeptide, PetD), cytochrome f and the Rieske protein, while the 4 small subunits are PetG, PetL, PetM and PetN. The complex functions as a dimer.

It localises to the plastid. It is found in the cyanelle thylakoid membrane. Its function is as follows. Component of the cytochrome b6-f complex, which mediates electron transfer between photosystem II (PSII) and photosystem I (PSI), cyclic electron flow around PSI, and state transitions. PetL is important for photoautotrophic growth as well as for electron transfer efficiency and stability of the cytochrome b6-f complex. This is Cytochrome b6-f complex subunit 6 from Cyanophora paradoxa.